Consider the following 389-residue polypeptide: tRNA-specific 2-thiouridylase MnmA (389 aa).

Residues 21-28 and Leu-47 each bind ATP; that span reads AMSGGVDS. Residue Cys-115 is the Nucleophile of the active site. The cysteines at positions 115 and 212 are disulfide-linked. Gly-139 contributes to the ATP binding site. Residues 162 to 164 form an interaction with tRNA region; it reads RDQ. The Cysteine persulfide intermediate role is filled by Cys-212.

It belongs to the MnmA/TRMU family.

It localises to the cytoplasm. The catalysed reaction is S-sulfanyl-L-cysteinyl-[protein] + uridine(34) in tRNA + AH2 + ATP = 2-thiouridine(34) in tRNA + L-cysteinyl-[protein] + A + AMP + diphosphate + H(+). Catalyzes the 2-thiolation of uridine at the wobble position (U34) of tRNA, leading to the formation of s(2)U34. In Xanthobacter autotrophicus (strain ATCC BAA-1158 / Py2), this protein is tRNA-specific 2-thiouridylase MnmA.